We begin with the raw amino-acid sequence, 758 residues long: Aspartyl/asparaginyl beta-hydroxylase (758 aa).

Residues 1-46 form a disordered region; it reads MAQRKNAKSSGNSSSSGSGSGSTSAGSSSPGARRETKHGGHKNGRK. At 1-53 the chain is on the cytoplasmic side; sequence MAQRKNAKSSGNSSSSGSGSGSTSAGSSSPGARRETKHGGHKNGRKGGLSGTS. A compositionally biased stretch (low complexity) spans 9 to 31; sequence SSGNSSSSGSGSGSTSAGSSSPG. At Ser14 the chain carries Phosphoserine. The helical; Signal-anchor for type II membrane protein transmembrane segment at 54–74 threads the bilayer; it reads FFTWFMVIALLGVWTSVAVVW. An N-linked (GlcNAc...) asparagine glycan is attached at Leu64. Residues 75 to 758 are Lumenal-facing; it reads FDLVDYEEVL…PQQRRSLPAI (684 aa). Residues Asp91, Asp93, Asp95, Asp97, and Asp102 each coordinate Ca(2+). Disordered regions lie at residues 111 to 140 and 304 to 324; these read ERST…EAEP and EEQQ…EQKA. Positions 313 to 324 are enriched in basic and acidic residues; the sequence is TNRKTDDPEQKA. Residues 341–374 form a TPR 1 repeat; it reads IKAELDAAEKLRKRGKIEEAVNAFKELVRKYPQS. A glycan (N-linked (GlcNAc...) asparagine) is linked at Asn452. TPR repeat units follow at residues 454–487, 489–521, and 525–557; these read TSLK…TPND, FAKV…GDPG, and GRFY…GHFA. Trp625 is a 2-oxoglutarate binding site. An intrachain disulfide couples Cys641 to Cys648. Ser668 serves as a coordination point for 2-oxoglutarate. His679 lines the Fe cation pocket. Position 688-690 (688-690) interacts with 2-oxoglutarate; that stretch reads RMH. An N-linked (GlcNAc...) asparagine glycan is attached at Asn706. His725 is a binding site for Fe cation. Residue Arg735 participates in 2-oxoglutarate binding.

Belongs to the aspartyl/asparaginyl beta-hydroxylase family. As to quaternary structure, monomer. Isoform 8 interacts with ORAI1 and STIM1. Isoform 4 interacts with CASQ2. It depends on Fe cation as a cofactor. In terms of tissue distribution, isoform 1 is detected in all tissues tested. Isoform 8 is mainly expressed in pancreas, heart, brain, kidney and liver. Isoform 8 is expressed in kidney (at protein level).

The protein resides in the endoplasmic reticulum membrane. The protein localises to the sarcoplasmic reticulum membrane. The catalysed reaction is L-aspartyl-[protein] + 2-oxoglutarate + O2 = 3-hydroxy-L-aspartyl-[protein] + succinate + CO2. In terms of biological role, specifically hydroxylates an Asp or Asn residue in certain epidermal growth factor-like (EGF) domains of a number of proteins. Its function is as follows. Membrane-bound Ca(2+)-sensing protein, which is a structural component of the ER-plasma membrane junctions. Isoform 8 regulates the activity of Ca(+2) released-activated Ca(+2) (CRAC) channels in T-cells. The chain is Aspartyl/asparaginyl beta-hydroxylase (ASPH) from Homo sapiens (Human).